Reading from the N-terminus, the 681-residue chain is MRSWLGEGVRAQQWLSVCAGRQDMVLATVLLIAIVMMLLPLPTWMVDILITINLMFSVILLLIAIYLSDPLDLSVFPSLLLITTLYRLSLTISTSRLVLLQHNAGNIVDAFGKFVVGGNLTVGLVVFTIITIVQFIVITKGIERVAEVSARFSLDGMPGKQMSIDGDLRAGVIDADHARTLRQHVQQESRFLGAMDGAMKFVKGDTIAGIIVVLVNIIGGIIIAIVQYDMSMSEAVHTYSVLSIGDGLCGQIPSLLISLSAGIIVTRVPGEKRQNLATELSSQIARQPQSLILTAVVLMLLALIPGFPFITLAFFSALLALPIILIRRKKSVVSANGVEAPEKDSMVPGACPLILRLSPTLHSADLIRDIDAMRWFLFEDTGVPLPEVNIEVLPEPTEKLTVLLYQEPVFSLSIPAQADYLLIGADASVVGDSQTLPNGMGQICWLTKDMAHKAQGFGLDVFAGSQRISALLKCVLLRHMGEFIGVQETRYLMNAMEKNYSELVKELQRQLPINKIAETLQRLVSERVSIRDLRLIFGTLIDWAPREKDVLMLTEYVRIALRRHILRRLNPEGKPLPILRIGEGIENLVRESIRQTAMGTYTALSSRHKTQILQLIEQALKQSAKLFIVTSVDTRRFLRKITEATLFDVPILSWQELGEESLIQVVESIDLSEEELADNEE.

Helical transmembrane passes span 24 to 44 (MVLATVLLIAIVMMLLPLPTW), 48 to 68 (ILITINLMFSVILLLIAIYLS), 73 to 93 (LSVFPSLLLITTLYRLSLTIS), 118 to 138 (GNLTVGLVVFTIITIVQFIVI), 206 to 226 (TIAGIIVVLVNIIGGIIIAIV), 244 to 264 (IGDGLCGQIPSLLISLSAGII), and 295 to 315 (AVVLMLLALIPGFPFITLAFF).

It belongs to the FHIPEP (flagella/HR/invasion proteins export pore) family.

It localises to the cell inner membrane. Component of Salmonella pathogenicity island 2 (SPI-2) type III secretion system, required for secretion of some type III-secreted effectors including the SpvB exotoxin. The sequence is that of Secretion system apparatus protein SsaV (ssaV) from Salmonella typhimurium (strain 14028s / SGSC 2262).